We begin with the raw amino-acid sequence, 401 residues long: Cartilage-associated protein (401 aa).

The first 26 residues, 1 to 26 (MEPGRRGAAALLALLCVACALRAGRA), serve as a signal peptide directing secretion. N-linked (GlcNAc...) asparagine glycosylation is found at asparagine 87 and asparagine 363.

The protein belongs to the leprecan family. As to expression, found in articular chondrocytes. Expressed in a variety of tissues.

It is found in the secreted. Its subcellular location is the extracellular space. The protein resides in the extracellular matrix. Functionally, necessary for efficient 3-hydroxylation of fibrillar collagen prolyl residues. The chain is Cartilage-associated protein (CRTAP) from Homo sapiens (Human).